Reading from the N-terminus, the 539-residue chain is Inositol 1,4,5-triphosphate receptor associated 2 (539 aa).

Disordered stretches follow at residues 1–21 (MLCV…DVTR), 69–98 (YLTQ…LHMA), and 147–171 (AGEE…ISMP). The Cytoplasmic portion of the chain corresponds to 1-479 (MLCVKGPPEQ…LQASFRRANR (479 aa)). The segment covering 74–92 (SSEQTSSSESTVTSSESGS) has biased composition (low complexity). Residue threonine 78 is modified to Phosphothreonine. Residues 298–326 (MIQHVENLKRMYAKEHAELEDLKQALLQN) adopt a coiled-coil conformation. Residues 334–353 (PDEDDCQIKKRSSSLNSKPS) form a disordered region. 3 positions are modified to phosphoserine: serine 347, serine 354, and serine 408. Positions 418 to 449 (ERSDVKARDAPEPQGEEAVERTRKPSLSERRS) are disordered. A compositionally biased stretch (basic and acidic residues) spans 435–449 (AVERTRKPSLSERRS). The chain crosses the membrane as a helical; Anchor for type IV membrane protein span at residues 480-500 (ALWLTGLIIILIAALMSFLTG). Residues 501 to 539 (QLFQTAVEAAPTQEGDSWLSLEHILWPFTRLGHDGPPPV) lie on the Lumenal side of the membrane.

Belongs to the IRAG2 family. In terms of assembly, interacts (via coiled-coil domain) with ITPR3. Interacts with SUN1 and SUN2. Interacts with microtubules. Interacts with HCN4; regulates HCN4 channel activity. In terms of processing, the removal of the C-terminal lumenal domain occurs by proteolytic processing. In terms of tissue distribution, spleen and thymus. Expressed at high levels in pre B-cells, mature B-cells and pre T-cells. Expressed at low levels in mature T-cells and plasma B-cells. Expressed in circumvallate (CV), foliate (FL) and fungiform (FF) taste papillae cells of the tongue epithelium.

Its subcellular location is the cytoplasm. It localises to the endoplasmic reticulum membrane. It is found in the nucleus envelope. The protein localises to the cytoskeleton. The protein resides in the microtubule organizing center. Its subcellular location is the centrosome. It localises to the spindle pole. It is found in the chromosome. Functionally, plays a role in the delivery of peptides to major histocompatibility complex (MHC) class I molecules; this occurs in a transporter associated with antigen processing (TAP)-independent manner. May play a role in taste signal transduction via ITPR3. May play a role during fertilization in pronucleus congression and fusion. Plays a role in maintaining nuclear shape, maybe as a component of the LINC complex and through interaction with microtubules. Plays a role in the regulation of cellular excitability by regulating the hyperpolarization-activated cyclic nucleotide-gated HCN4 channel activity. This is Inositol 1,4,5-triphosphate receptor associated 2 (Irag2) from Mus musculus (Mouse).